The primary structure comprises 314 residues: Small ribosomal subunit protein RACK1 (314 aa).

At Thr10 the chain carries Phosphothreonine. The stretch at 13–44 (GHSGWVTSLSTAPENPDILLSGSRDKSIILWN) is one WD 1 repeat. Ser39 carries the post-translational modification Phosphoserine. At Tyr52 the chain carries Phosphotyrosine. WD repeat units lie at residues 61 to 91 (GHSH…RLWD), 103 to 133 (GHTS…KIWN), 146 to 178 (GHSD…KVWD), 190 to 220 (GHTG…MLWD), 231 to 260 (EAKA…RIFD), and 281 to 311 (SSEP…RVWQ). Ser148 is subject to Phosphoserine. 2 positions are modified to phosphoserine: Ser242 and Ser255.

This sequence belongs to the WD repeat G protein beta family. Ribosomal protein RACK1 subfamily. In terms of assembly, component of the small ribosomal subunit (SSU). Mature yeast ribosomes consist of a small (40S) and a large (60S) subunit. The 40S small subunit contains 1 molecule of ribosomal RNA (18S rRNA) and at least 33 different proteins. The large 60S subunit contains 3 rRNA molecules (25S, 5.8S and 5S rRNA) and at least 46 different proteins. RACK1 is located at the head of the SSU in the vicinity of the mRNA exit channel. RACK1 interacts with the mRNA-binding protein SCP16. RACK1 also exists simultaneously as a homodimer in a cytosolic non-ribosome-bound form. Interacts with pck2. Interacts with pat1/ran1.

Its subcellular location is the cytoplasm. The protein localises to the membrane. Functionally, component of the ribosome, a large ribonucleoprotein complex responsible for the synthesis of proteins in the cell. The small ribosomal subunit (SSU) binds messenger RNAs (mRNAs) and translates the encoded message by selecting cognate aminoacyl-transfer RNA (tRNA) molecules. The large subunit (LSU) contains the ribosomal catalytic site termed the peptidyl transferase center (PTC), which catalyzes the formation of peptide bonds, thereby polymerizing the amino acids delivered by tRNAs into a polypeptide chain. The nascent polypeptides leave the ribosome through a tunnel in the LSU and interact with protein factors that function in enzymatic processing, targeting, and the membrane insertion of nascent chains at the exit of the ribosomal tunnel. Located at the head of the 40S ribosomal subunit in the vicinity of the mRNA exit channel, RACK1 serves as a scaffold protein that can recruit other proteins to the ribosome. Involved in induction of the ribosome quality control (RQC) pathway; a pathway that degrades nascent peptide chains during problematic translation. Involved in the negative regulation of translation of a specific subset of proteins. May be a receptor for protein kinase C in the regulation of actin cytoskeleton organization during cell wall synthesis and morphogenesis. Involved in the control of G2/M transition. May function as an anchoring protein for pat1/ran1 kinase. Negatively regulates the cell integrity transduction pathway by favoring translation of the tyrosine-phosphatases pyp1 and pyp2 that deactivate pmk1. Positively regulates the synthesis of the stress-responsive transcription factor Atf1 and the cytoplasmic catalase, a detoxificant enzyme induced by treatment with hydrogen peroxide. This is Small ribosomal subunit protein RACK1 from Schizosaccharomyces pombe (strain 972 / ATCC 24843) (Fission yeast).